Reading from the N-terminus, the 150-residue chain is UPF0540 protein At1g62080 (150 aa).

The first 21 residues, 1–21, serve as a signal peptide directing secretion; the sequence is MNATKFLVLLVIGVLCAIVTA. The segment covering 119 to 135 has biased composition (low complexity); that stretch reads AAAARAKGKVASASRVK. The tract at residues 119-150 is disordered; it reads AAAARAKGKVASASRVKGSSEKKKKDRKGKKD.

This sequence belongs to the UPF0540 family.

The sequence is that of UPF0540 protein At1g62080 from Arabidopsis thaliana (Mouse-ear cress).